The following is a 339-amino-acid chain: Bifunctional NMN adenylyltransferase/Nudix hydrolase (339 aa).

The interval 1–183 (MQTKYQYGIY…RYIALCDEYQ (183 aa)) is NMN adenylyltransferase. The Nudix hydrolase domain maps to 199–335 (PTFITTDAVV…EDHFQIIQHF (137 aa)). A Nudix box motif is present at residues 233–254 (GFIKQNETLVEGMLRELKEETR).

It in the N-terminal section; belongs to the archaeal NMN adenylyltransferase family. Requires Mg(2+) as cofactor. Mn(2+) serves as cofactor.

It is found in the cytoplasm. It carries out the reaction beta-nicotinamide D-ribonucleotide + ATP + H(+) = diphosphate + NAD(+). It functions in the pathway cofactor biosynthesis; NAD(+) biosynthesis; NAD(+) from nicotinamide D-ribonucleotide: step 1/1. In terms of biological role, the Nudix hydrolase domain is active on ADP-ribose, (2')-phospho-ADP-ribose, IDP-ribose and NADPH. The protein is Bifunctional NMN adenylyltransferase/Nudix hydrolase of Synechocystis sp. (strain ATCC 27184 / PCC 6803 / Kazusa).